The following is a 470-amino-acid chain: Cell division protein FtsA (470 aa).

The disordered stretch occupies residues 416–470 (NKKDTHENEVESTDEEIYQSEDNHQEHKQNHEHVQDKDKDKEESKFKKLMKSLFE). Residues 425 to 434 (VESTDEEIYQ) show a composition bias toward acidic residues. The segment covering 436–461 (EDNHQEHKQNHEHVQDKDKDKEESKF) has biased composition (basic and acidic residues).

Belongs to the FtsA/MreB family. Self-interacts. Interacts with FtsZ.

The protein localises to the cell membrane. Its function is as follows. Cell division protein that is involved in the assembly of the Z ring. May serve as a membrane anchor for the Z ring. This is Cell division protein FtsA from Staphylococcus aureus (strain MSSA476).